A 664-amino-acid polypeptide reads, in one-letter code: Cyclic nucleotide-gated channel alpha-2 (664 aa).

Residues 1–20 (MTEKSNGVKSSPANNHNNHV) are compositionally biased toward polar residues. Positions 1–49 (MTEKSNGVKSSPANNHNNHVPATIKANGKDESRTRSRPQSAADDDTSSE) are disordered. Over 1 to 144 (MTEKSNGVKS…PAGDWYYRWL (144 aa)) the chain is Cytoplasmic. A helical membrane pass occupies residues 145-166 (FVIAMPVLYNWCLLVARACFSD). Residues 167–176 (LQRGYFLVWL) are Extracellular-facing. The chain crosses the membrane as a helical span at residues 177–197 (VLDYFSDVVYIADLFIRLRTG). The Cytoplasmic portion of the chain corresponds to 198–222 (FLEQGLLVKDPKKLRDNYIHTLQFK). Residues 223–241 (LDVASIIPTDLIYFAVGIH) form a helical membrane-spanning segment. The Extracellular portion of the chain corresponds to 242 to 246 (NPELR). The chain crosses the membrane as a helical span at residues 247 to 265 (FNRLLHFARMFEFFDRTET). At 266 to 272 (RTSYPNI) the chain is on the cytoplasmic side. The ion conduction pathway stretch occupies residues 270–378 (PNIFRISNLV…GNVGSMISNM (109 aa)). The chain crosses the membrane as a helical span at residues 273 to 296 (FRISNLVLYILVIIHWNACIYYAI). Over 297-319 (SKSIGFGVDTWVYPNITDPEYGY) the chain is Extracellular. A run of 2 helical transmembrane segments spans residues 320–354 (LARE…LFVI) and 355–379 (FDFL…SNMN). The segment at 337–340 (TIGE) is selectivity filter. Residues 380 to 456 (ATRAEFQAKI…STLKKVRIFQ (77 aa)) form a C-linker region. Residues 380–664 (ATRAEFQAKI…SPEPAAAEQP (285 aa)) lie on the Cytoplasmic side of the membrane. The segment at 460-580 (AGLLVELVLK…EERGREILMK (121 aa)) is cyclic nucleotide-binding domain. 3',5'-cyclic GMP contacts are provided by glycine 520, serine 523, arginine 536, and threonine 537. 3',5'-cyclic AMP contacts are provided by arginine 536 and threonine 537. Residues 597–651 (VQEKLKQLETNMETLYTRFGRLLAEYTGAQQKLKQRITVLEVKMKQNTEDDYLSD) adopt a coiled-coil conformation. Residues 644–664 (TEDDYLSDGMNSPEPAAAEQP) are disordered.

The protein belongs to the cyclic nucleotide-gated cation channel (TC 1.A.1.5) family. CNGA2 subfamily. The olfactory cyclic nucleotide-gated channel is an heterotetramer composed of CNGA2, CNGA4 and CNGB1b subunits with 2:1:1 stoichiometry.

It localises to the cell projection. Its subcellular location is the cilium membrane. It carries out the reaction Ca(2+)(in) = Ca(2+)(out). The catalysed reaction is Na(+)(in) = Na(+)(out). The enzyme catalyses K(+)(in) = K(+)(out). It catalyses the reaction NH4(+)(in) = NH4(+)(out). It carries out the reaction Rb(+)(in) = Rb(+)(out). The catalysed reaction is Li(+)(in) = Li(+)(out). The enzyme catalyses Cs(+)(in) = Cs(+)(out). Pore-forming subunit of the olfactory cyclic nucleotide-gated channel. Operates in the cilia of olfactory sensory neurons where chemical stimulation of the odorant is converted to an electrical signal. Mediates odorant-induced cAMP-dependent Ca(2+) influx triggering neuron depolarization. The rise of intracellular Ca(2+) levels potentiates the olfactory response by activating Ca(2+)-dependent Cl(-) channels, but it also serves as a negative feedback signal to desensitize the channel for rapid adaptation to odorants. Conducts cAMP- and cGMP-gated ion currents, with permeability for monovalent and divalent cations. The chain is Cyclic nucleotide-gated channel alpha-2 from Oryctolagus cuniculus (Rabbit).